The following is a 188-amino-acid chain: Mitochondrial import receptor subunit TOM20 homolog (188 aa).

At 1–12 (MTDTLFGFNKSN) the chain is on the mitochondrial intermembrane side. A helical membrane pass occupies residues 13–31 (VVLAAGVAGAAFLGYCIYF). The Cytoplasmic segment spans residues 32–188 (DHKRINAPDY…ELIDDTDDLE (157 aa)). Disordered regions lie at residues 48-67 (KRRA…PAGG) and 155-188 (ADEA…DDLE). Residues 58-67 (MAARRPPAGG) are compositionally biased toward low complexity.

It belongs to the Tom20 family. Forms part of the preprotein translocase complex of the outer mitochondrial membrane (TOM complex).

It localises to the mitochondrion outer membrane. In terms of biological role, central component of the receptor complex responsible for the recognition and translocation of cytosolically synthesized mitochondrial preproteins. Together with TOM22 functions as the transit peptide receptor at the surface of the mitochondrion outer membrane and facilitates the movement of preproteins into the translocation pore. In Caenorhabditis briggsae, this protein is Mitochondrial import receptor subunit TOM20 homolog (tomm-20).